The chain runs to 236 residues: MKVINATSYSDLSRKAANIISAQVILKPNSVLGLATGSTPIGTYKQLIEWYNKGDIDFSSTISVNLDEYVGLEPTNEQSYRYFMTENLFRHINIPQENTHVPSGLANDMEAECQNYDALITNLGGIDLQLLGIGHNGHIGFNEPDDAFEKTTHIVSLGESTIKANARFFEDINEVPTKAITMGIKSIMQAKKVLLIANGPDKKDIIEKALYGPVTPSVPASILQLHPDLTVICCFE.

Asp67 (proton acceptor; for enolization step) is an active-site residue. Asn136 functions as the For ring-opening step in the catalytic mechanism. The Proton acceptor; for ring-opening step role is filled by His138. Glu143 functions as the For ring-opening step in the catalytic mechanism.

This sequence belongs to the glucosamine/galactosamine-6-phosphate isomerase family. NagB subfamily.

The catalysed reaction is alpha-D-glucosamine 6-phosphate + H2O = beta-D-fructose 6-phosphate + NH4(+). It functions in the pathway amino-sugar metabolism; N-acetylneuraminate degradation; D-fructose 6-phosphate from N-acetylneuraminate: step 5/5. Catalyzes the reversible isomerization-deamination of glucosamine 6-phosphate (GlcN6P) to form fructose 6-phosphate (Fru6P) and ammonium ion. The protein is Glucosamine-6-phosphate deaminase of Lachnoclostridium phytofermentans (strain ATCC 700394 / DSM 18823 / ISDg) (Clostridium phytofermentans).